We begin with the raw amino-acid sequence, 249 residues long: Isoprenyl transferase (249 aa).

Residue aspartate 29 is part of the active site. Aspartate 29 is a Mg(2+) binding site. Residues 30–33, tryptophan 34, arginine 42, histidine 46, and 74–76 contribute to the substrate site; these read GNGR and STE. Asparagine 77 acts as the Proton acceptor in catalysis. Residues tryptophan 78, arginine 80, arginine 197, and 203 to 205 each bind substrate; that span reads RLS. Residue glutamate 216 coordinates Mg(2+).

It belongs to the UPP synthase family. Homodimer. Requires Mg(2+) as cofactor.

Catalyzes the condensation of isopentenyl diphosphate (IPP) with allylic pyrophosphates generating different type of terpenoids. The polypeptide is Isoprenyl transferase (Trichormus variabilis (strain ATCC 29413 / PCC 7937) (Anabaena variabilis)).